Consider the following 338-residue polypeptide: Galaxin (338 aa).

A signal peptide spans 1-23; it reads MKPSGAFLSLCVVLLSLATHCFS. Positions 30–47 are enriched in basic and acidic residues; sequence RRDAHSDTNALKSRDRRQ. Residues 30–50 are disordered; that stretch reads RRDAHSDTNALKSRDRRQAPA.

In terms of tissue distribution, component of the acid-insoluble organic matrix of the aragonitic skeleton (at protein level). Initially, expressed in an aboral submarginal ring and then along calcifying septa.

Its subcellular location is the secreted. The chain is Galaxin from Acropora millepora (Staghorn coral).